A 215-amino-acid chain; its full sequence is Large ribosomal subunit protein bL25 (215 aa).

Positions Glu192 to Glu202 are enriched in acidic residues. The segment at Glu192–Glu215 is disordered. A compositionally biased stretch (basic and acidic residues) spans Glu204–Glu215.

This sequence belongs to the bacterial ribosomal protein bL25 family. CTC subfamily. In terms of assembly, part of the 50S ribosomal subunit; part of the 5S rRNA/L5/L18/L25 subcomplex. Contacts the 5S rRNA. Binds to the 5S rRNA independently of L5 and L18.

In terms of biological role, this is one of the proteins that binds to the 5S RNA in the ribosome where it forms part of the central protuberance. In Thermotoga neapolitana (strain ATCC 49049 / DSM 4359 / NBRC 107923 / NS-E), this protein is Large ribosomal subunit protein bL25.